A 505-amino-acid chain; its full sequence is Alpha-1-syntrophin (505 aa).

Disordered regions lie at residues 1–24 and 40–75; these read MASG…AGAG and LTVS…AAPP. 2 PH domains span residues 6–269 and 293–401; these read RAPR…AQIN and DIKQ…DGCH. Positions 9-18 are enriched in low complexity; the sequence is RTGLLELRAG. The region spanning 87 to 170 is the PDZ domain; the sequence is RVTVRKADAG…EVVLEVKYMK (84 aa). A phosphoserine mark is found at Ser-101, Ser-184, Ser-189, Ser-193, and Ser-200. Residues 183 to 212 form a disordered region; the sequence is TSVGWDSPPASPLQRQPSSPGPQTRNLSEA. Residues 195–209 show a composition bias toward polar residues; it reads LQRQPSSPGPQTRNL. In terms of domain architecture, SU spans 449 to 505; the sequence is PFEKLQMSSDDGASLLFLDFGGAEGEIQLDLHSCPKTMVFIIHSFLSAKVTRLGLLA. Positions 483 to 505 are calmodulin-binding; sequence PKTMVFIIHSFLSAKVTRLGLLA.

Belongs to the syntrophin family. As to quaternary structure, monomer and homodimer. Interacts with the dystrophin related protein DTNA; SGCG of the dystrophin glycoprotein complex; NOS1; GRB2; GA; TGFA; MAPK12 and the sodium channel proteins SCN4A and SCN5A. Interacts with the dystrophin protein DMD in a calmodulin dependent manner and with related protein UTRN; SGCA of the dystrophin glycoprotein complex; F-actin; calmodulin and with the other members of the syntrophin family SNTB1 and SNTB2. Interacts with MYOC; regulates muscle hypertrophy. Interacts with DTNB. In terms of processing, phosphorylated by CaM-kinase II. Phosphorylation may inhibit the interaction with DMD. In terms of tissue distribution, highly expressed in skeletal and cardiac muscle and is also detected in brain.

The protein resides in the cell membrane. The protein localises to the sarcolemma. It is found in the cell junction. Its subcellular location is the cytoplasm. It localises to the cytoskeleton. Functionally, adapter protein that binds to and probably organizes the subcellular localization of a variety of membrane proteins. May link various receptors to the actin cytoskeleton and the extracellular matrix via dystrophin glycoprotein complex. Plays an important role in synapse formation and in the organization of UTRN and acetylcholine receptors at the neuromuscular synapse. Binds to phosphatidylinositol 4,5-bisphosphate. The sequence is that of Alpha-1-syntrophin (SNTA1) from Oryctolagus cuniculus (Rabbit).